The chain runs to 150 residues: Urease subunit beta (150 aa).

Residues 122 to 140 (GAVVGDSPAATPGTTGATG) are compositionally biased toward low complexity. Positions 122-150 (GAVVGDSPAATPGTTGATGDLPGYLGEGS) are disordered.

It belongs to the urease beta subunit family. In terms of assembly, heterotrimer of UreA (gamma), UreB (beta) and UreC (alpha) subunits. Three heterotrimers associate to form the active enzyme.

It localises to the cytoplasm. It catalyses the reaction urea + 2 H2O + H(+) = hydrogencarbonate + 2 NH4(+). The protein operates within nitrogen metabolism; urea degradation; CO(2) and NH(3) from urea (urease route): step 1/1. The chain is Urease subunit beta from Frankia alni (strain DSM 45986 / CECT 9034 / ACN14a).